A 1444-amino-acid chain; its full sequence is DNA polymerase III PolC-type (1444 aa).

The 157-residue stretch at 428-584 folds into the Exonuclease domain; it reads YCVFDVETTG…FDAEATAYLA (157 aa).

This sequence belongs to the DNA polymerase type-C family. PolC subfamily.

It localises to the cytoplasm. It carries out the reaction DNA(n) + a 2'-deoxyribonucleoside 5'-triphosphate = DNA(n+1) + diphosphate. Functionally, required for replicative DNA synthesis. This DNA polymerase also exhibits 3' to 5' exonuclease activity. This is DNA polymerase III PolC-type from Listeria innocua serovar 6a (strain ATCC BAA-680 / CLIP 11262).